Here is a 441-residue protein sequence, read N- to C-terminus: tRNA modification GTPase MnmE (441 aa).

3 residues coordinate (6S)-5-formyl-5,6,7,8-tetrahydrofolate: Arg-21, Glu-79, and Lys-118. The TrmE-type G domain maps to 214–367 (GIHITILGAP…LVAELARVVE (154 aa)). GTP is bound by residues 224–229 (NAGKSS), 243–249 (SAQAGTT), and 268–271 (DTAG). Residues Ser-228 and Thr-249 each coordinate Mg(2+). (6S)-5-formyl-5,6,7,8-tetrahydrofolate is bound at residue Lys-441.

The protein belongs to the TRAFAC class TrmE-Era-EngA-EngB-Septin-like GTPase superfamily. TrmE GTPase family. As to quaternary structure, homodimer. Heterotetramer of two MnmE and two MnmG subunits. It depends on K(+) as a cofactor.

The protein localises to the cytoplasm. Functionally, exhibits a very high intrinsic GTPase hydrolysis rate. Involved in the addition of a carboxymethylaminomethyl (cmnm) group at the wobble position (U34) of certain tRNAs, forming tRNA-cmnm(5)s(2)U34. The chain is tRNA modification GTPase MnmE from Paramagnetospirillum magneticum (strain ATCC 700264 / AMB-1) (Magnetospirillum magneticum).